The chain runs to 153 residues: 6,7-dimethyl-8-ribityllumazine synthase (153 aa).

5-amino-6-(D-ribitylamino)uracil is bound by residues Phe-22, 56 to 58 (AFE), and 80 to 82 (CVI). Residue 85 to 86 (AT) participates in (2S)-2-hydroxy-3-oxobutyl phosphate binding. The active-site Proton donor is the His-88. A 5-amino-6-(D-ribitylamino)uracil-binding site is contributed by Phe-113. Residue Arg-127 participates in (2S)-2-hydroxy-3-oxobutyl phosphate binding.

The protein belongs to the DMRL synthase family.

The catalysed reaction is (2S)-2-hydroxy-3-oxobutyl phosphate + 5-amino-6-(D-ribitylamino)uracil = 6,7-dimethyl-8-(1-D-ribityl)lumazine + phosphate + 2 H2O + H(+). The protein operates within cofactor biosynthesis; riboflavin biosynthesis; riboflavin from 2-hydroxy-3-oxobutyl phosphate and 5-amino-6-(D-ribitylamino)uracil: step 1/2. Functionally, catalyzes the formation of 6,7-dimethyl-8-ribityllumazine by condensation of 5-amino-6-(D-ribitylamino)uracil with 3,4-dihydroxy-2-butanone 4-phosphate. This is the penultimate step in the biosynthesis of riboflavin. The chain is 6,7-dimethyl-8-ribityllumazine synthase from Endomicrobium trichonymphae.